A 319-amino-acid chain; its full sequence is Protease HtpX homolog (319 aa).

2 helical membrane passes run 3–23 (LTVL…AWAL) and 32–52 (TGVA…QWLF). Histidine 134 is a Zn(2+) binding site. Glutamate 135 is a catalytic residue. A Zn(2+)-binding site is contributed by histidine 138. Transmembrane regions (helical) follow at residues 146–166 (VILA…TLVW) and 182–202 (MALV…QLIV). Glutamate 210 lines the Zn(2+) pocket.

Belongs to the peptidase M48B family. It depends on Zn(2+) as a cofactor.

It localises to the cell membrane. This chain is Protease HtpX homolog, found in Aeropyrum pernix (strain ATCC 700893 / DSM 11879 / JCM 9820 / NBRC 100138 / K1).